Consider the following 1488-residue polypeptide: WD repeat-containing protein 7 (1488 aa).

WD repeat units lie at residues 17 to 56 (APTH…EVNP), 62 to 104 (GHTA…CIEF), 156 to 199 (ISPD…SGLQ), 324 to 366 (VICP…DKQE), 404 to 443 (NEPL…IVQL), 462 to 507 (GHRN…MKHI), and 558 to 597 (RHLF…LDRC). 2 disordered regions span residues 761-781 (EEED…PEYR) and 911-947 (GDHM…QGQI). The segment covering 768-781 (VMRQRREESDPEYR) has biased composition (basic and acidic residues). The residue at position 935 (serine 935) is a Phosphoserine. Residues 937-947 (PASSNIVQGQI) are compositionally biased toward polar residues. WD repeat units lie at residues 1349 to 1388 (PAIC…CQTI) and 1390 to 1430 (GHKG…LGSI). The residue at position 1454 (serine 1454) is a Phosphoserine.

This Rattus norvegicus (Rat) protein is WD repeat-containing protein 7 (Wdr7).